A 194-amino-acid chain; its full sequence is Lachesicidin (194 aa).

A signal peptide spans 1-22; that stretch reads MQGFFWKTWLVLAVCGTPASLA. A propeptide spanning residues 23-160 is cleaved from the precursor; sequence HRPLSYGEAL…DEEKDQPKRV (138 aa). 2 disulfides stabilise this stretch: Cys79-Cys90 and Cys101-Cys118. Positions 125 to 154 are enriched in acidic residues; sequence EEEEEEEEEEQKAEAENDEEVEKEKEDEEK. The disordered stretch occupies residues 125-157; sequence EEEEEEEEEEQKAEAENDEEVEKEKEDEEKDQP.

Belongs to the cathelicidin family. As to expression, expressed by the venom gland.

It localises to the secreted. The protein resides in the target cell membrane. In terms of biological role, potent antimicrobial peptide against Gram-negative and Gram-positive bacteria. Adopts an amphipathic alpha helical conformation, that may allow to partition into the target membrane. Low hemolytic activities have been observed on mammalian cells. In Lachesis muta rhombeata (Bushmaster), this protein is Lachesicidin.